A 160-amino-acid chain; its full sequence is 2-C-methyl-D-erythritol 2,4-cyclodiphosphate synthase (160 aa).

A divalent metal cation-binding residues include Asp11 and His13. 4-CDP-2-C-methyl-D-erythritol 2-phosphate-binding positions include 11-13 (DIH) and 37-38 (HS). His45 is a binding site for a divalent metal cation. 4-CDP-2-C-methyl-D-erythritol 2-phosphate contacts are provided by residues 59–61 (DIG), 135–138 (TTNE), and Arg145.

The protein belongs to the IspF family. In terms of assembly, homotrimer. A divalent metal cation serves as cofactor.

The catalysed reaction is 4-CDP-2-C-methyl-D-erythritol 2-phosphate = 2-C-methyl-D-erythritol 2,4-cyclic diphosphate + CMP. It functions in the pathway isoprenoid biosynthesis; isopentenyl diphosphate biosynthesis via DXP pathway; isopentenyl diphosphate from 1-deoxy-D-xylulose 5-phosphate: step 4/6. Its function is as follows. Involved in the biosynthesis of isopentenyl diphosphate (IPP) and dimethylallyl diphosphate (DMAPP), two major building blocks of isoprenoid compounds. Catalyzes the conversion of 4-diphosphocytidyl-2-C-methyl-D-erythritol 2-phosphate (CDP-ME2P) to 2-C-methyl-D-erythritol 2,4-cyclodiphosphate (ME-CPP) with a corresponding release of cytidine 5-monophosphate (CMP). The protein is 2-C-methyl-D-erythritol 2,4-cyclodiphosphate synthase of Synechococcus elongatus (strain ATCC 33912 / PCC 7942 / FACHB-805) (Anacystis nidulans R2).